The primary structure comprises 301 residues: MKLEGVIVATVMPFAKDGVNYEGLRLLLSKIVEAGYHGVFPTSSTGEVTKLSAEERVRVMQLAKEVAGGKALVVAGTGTGDHVSTIDIARKYKDVGVDAILITPPYYIQYDWAALYAFYKKVLDKVDIPVILYTIPLATGYNVPVEVFEMVAGEYSQVVGVKDSSGDFRYHLDLIHLLGKRLSVLQGLDMLFVPSLVMGAHGGILAGPNFLGRITLEQYLLVKEGKIAEAVALHNKLMPLWRFMGGCGLVGKLGGKWPTLYKLATQLVHGIDMGPPREPLPPVDDKDRRELEKILKELGLI.

Residues Ser-44 and Tyr-107 each act as charge relay system in the active site. The Proton donor role is filled by Tyr-133. Lys-162 functions as the Schiff-base intermediate with substrate in the catalytic mechanism.

This sequence belongs to the DapA family. In terms of assembly, homotetramer.

The protein localises to the cytoplasm. This is an uncharacterized protein from Pyrobaculum aerophilum (strain ATCC 51768 / DSM 7523 / JCM 9630 / CIP 104966 / NBRC 100827 / IM2).